Here is a 674-residue protein sequence, read N- to C-terminus: MVGIDALRSEAERLRSDIERHNHLYYVEAKPELSDYDFDLLLDRLVQLEREHPELVTPDSPTQRVGGTITKEFPSVEHREPMLSLANTYSIGEVEEFVGRLNRLLEAEGAQGRDTVAELKFDGVAVSLLYRDGLLIRGATRGDGRRGDDITVNLKTVPSIPLRLGEFDGPFSAGEGREVEVRGEVLMRKEDFEALNDTRPEEDRFANPRNATAGTLKLQDSREVARRSLWFVAYYVSGLHDEDTRHVDRLKLLETAGFSTGNQYRLCHGIEEIEAFMQFWDEGRRALPYETDGVVVKLNDVRQWRLLGATSKSPRWAIAYKYPASRATTLLRDIVFQVGRLGTITPVAELEPVHIAGSTVARSTLHNFDEMRRLGVMPGDRVVIEKSGEVIPKVISVLLEERPPGLSAKELPTHCPDCGTPLVQPEGEVSWYCPNEEGCGAQIRGRVLHFASRNAMDIENLGESLVEQLVAKGMVKDPGDLYFLREEELAGLERMGEKSARNLLQGLLKSREQSFARLLFGLGIRHVGRATARELAKACSSIEVLKEASFEELSEVPDIGPVIARSIRDWFLKPAIPSLIEKLRRAGLPLAAEEPGPLVNTNFEGLTVVFTGGLQRHDRSSAGELVVARGGIVVSTVSKKTGLVVAGKEAGSKLEKARKLGLRIITEDEFDALL.

NAD(+) contacts are provided by residues 35 to 39, 84 to 85, and glutamate 118; these read DYDFD and SL. Residue lysine 120 is the N6-AMP-lysine intermediate of the active site. NAD(+)-binding residues include arginine 141, glutamate 184, lysine 297, and lysine 321. Zn(2+) is bound by residues cysteine 415, cysteine 418, cysteine 433, and cysteine 439. Residues 598-674 enclose the BRCT domain; the sequence is LVNTNFEGLT…ITEDEFDALL (77 aa).

This sequence belongs to the NAD-dependent DNA ligase family. LigA subfamily. The cofactor is Mg(2+). Mn(2+) serves as cofactor.

The enzyme catalyses NAD(+) + (deoxyribonucleotide)n-3'-hydroxyl + 5'-phospho-(deoxyribonucleotide)m = (deoxyribonucleotide)n+m + AMP + beta-nicotinamide D-nucleotide.. DNA ligase that catalyzes the formation of phosphodiester linkages between 5'-phosphoryl and 3'-hydroxyl groups in double-stranded DNA using NAD as a coenzyme and as the energy source for the reaction. It is essential for DNA replication and repair of damaged DNA. The polypeptide is DNA ligase (Chlorobium phaeovibrioides (strain DSM 265 / 1930) (Prosthecochloris vibrioformis (strain DSM 265))).